A 287-amino-acid chain; its full sequence is Probable endonuclease 4 (287 aa).

Residues histidine 69, histidine 109, glutamate 146, aspartate 180, histidine 183, histidine 217, aspartate 230, histidine 232, and glutamate 262 each coordinate Zn(2+).

It belongs to the AP endonuclease 2 family. Requires Zn(2+) as cofactor.

It carries out the reaction Endonucleolytic cleavage to 5'-phosphooligonucleotide end-products.. Its function is as follows. Endonuclease IV plays a role in DNA repair. It cleaves phosphodiester bonds at apurinic or apyrimidinic (AP) sites, generating a 3'-hydroxyl group and a 5'-terminal sugar phosphate. This Petrotoga mobilis (strain DSM 10674 / SJ95) protein is Probable endonuclease 4.